The chain runs to 284 residues: Bifunctional protein FolD (284 aa).

NADP(+)-binding positions include 166–168 (GAS), serine 191, and isoleucine 232.

It belongs to the tetrahydrofolate dehydrogenase/cyclohydrolase family. Homodimer.

The catalysed reaction is (6R)-5,10-methylene-5,6,7,8-tetrahydrofolate + NADP(+) = (6R)-5,10-methenyltetrahydrofolate + NADPH. It carries out the reaction (6R)-5,10-methenyltetrahydrofolate + H2O = (6R)-10-formyltetrahydrofolate + H(+). The protein operates within one-carbon metabolism; tetrahydrofolate interconversion. Its function is as follows. Catalyzes the oxidation of 5,10-methylenetetrahydrofolate to 5,10-methenyltetrahydrofolate and then the hydrolysis of 5,10-methenyltetrahydrofolate to 10-formyltetrahydrofolate. The protein is Bifunctional protein FolD of Neisseria meningitidis serogroup A / serotype 4A (strain DSM 15465 / Z2491).